A 191-amino-acid chain; its full sequence is Molybdenum cofactor guanylyltransferase (191 aa).

GTP contacts are provided by residues 11–13 (LCG), Lys-23, Asp-66, and Asp-97. Asp-97 provides a ligand contact to Mg(2+).

This sequence belongs to the MobA family. In terms of assembly, monomer. Requires Mg(2+) as cofactor.

It localises to the cytoplasm. The enzyme catalyses Mo-molybdopterin + GTP + H(+) = Mo-molybdopterin guanine dinucleotide + diphosphate. Functionally, transfers a GMP moiety from GTP to Mo-molybdopterin (Mo-MPT) cofactor (Moco or molybdenum cofactor) to form Mo-molybdopterin guanine dinucleotide (Mo-MGD) cofactor. The sequence is that of Molybdenum cofactor guanylyltransferase from Campylobacter jejuni subsp. jejuni serotype O:6 (strain 81116 / NCTC 11828).